We begin with the raw amino-acid sequence, 342 residues long: Tetraacyldisaccharide 4'-kinase (342 aa).

An ATP-binding site is contributed by 68 to 75 (TVGGTGKT).

Belongs to the LpxK family.

The enzyme catalyses a lipid A disaccharide + ATP = a lipid IVA + ADP + H(+). Its pathway is glycolipid biosynthesis; lipid IV(A) biosynthesis; lipid IV(A) from (3R)-3-hydroxytetradecanoyl-[acyl-carrier-protein] and UDP-N-acetyl-alpha-D-glucosamine: step 6/6. In terms of biological role, transfers the gamma-phosphate of ATP to the 4'-position of a tetraacyldisaccharide 1-phosphate intermediate (termed DS-1-P) to form tetraacyldisaccharide 1,4'-bis-phosphate (lipid IVA). This is Tetraacyldisaccharide 4'-kinase from Burkholderia lata (strain ATCC 17760 / DSM 23089 / LMG 22485 / NCIMB 9086 / R18194 / 383).